The following is a 589-amino-acid chain: MAESGESGGPPGSQDSAAGAEGAGAPAAAASAEPKIMKVTVKTPKEKEEFAVPENSSVQQFKEEISKRFKSHTDQLVLIFAGKILKDQDTLSQHGIHDGLTVHLVIKTQNRPQDHSAQQTNTAGSNVTTSSTPNSNSTSGSATSNPFGLGGLGGLAGLSSLGLNTTNFSELQSQMQRQLLSNPEMMVQIMENPFVQSMLSNPDLMRQLIMANPQMQQLIQRNPEISHMLNNPDIMRQTLELARNPAMMQEMMRNQDRALSNLESIPGGYNALRRMYTDIQEPMLSAAQEQFGGNPFASLVSNTSSGEGSQPSRTENRDPLPNPWAPQTSQSSSASSGTASTVGGTTGSTASGTSGQSTTAPNLVPGVGASMFNTPGMQSLLQQITENPQLMQNMLSAPYMRSMMQSLSQNPDLAAQMMLNNPLFAGNPQLQEQMRQQLPTFLQQMQNPDTLSAMSNPRAMQALLQIQQGLQTLATEAPGLIPGFTPGLGALGSTGGSSGTNGSNATPSENTSPTAGTTEPGHQQFIQQMLQALAGVNPQLQNPEVRFQQQLEQPSAMGFLNREANLQALIATGGDINAAIERLLGSQPS.

Positions 1–11 (MAESGESGGPP) are enriched in gly residues. Disordered regions lie at residues 1–35 (MAES…AEPK) and 110–145 (NRPQ…ATSN). Residue Ala-2 is modified to N-acetylalanine. A compositionally biased stretch (low complexity) spans 12 to 35 (GSQDSAAGAEGAGAPAAAASAEPK). In terms of domain architecture, Ubiquitin-like spans 37-111 (MKVTVKTPKE…VHLVIKTQNR (75 aa)). Over residues 110-124 (NRPQDHSAQQTNTAG) the composition is skewed to polar residues. Positions 125–145 (SNVTTSSTPNSNSTSGSATSN) are enriched in low complexity. An interaction with UBXN4 region spans residues 178–428 (QLLSNPEMMV…LNNPLFAGNP (251 aa)). STI1 domains lie at 182–210 (NPEM…QLIM) and 212–251 (NPQM…MQEM). The segment at 295–371 (PFASLVSNTS…NLVPGVGASM (77 aa)) is disordered. The segment covering 299–313 (LVSNTSSGEGSQPSR) has biased composition (polar residues). The segment covering 327–360 (QTSQSSSASSGTASTVGGTTGSTASGTSGQSTTA) has biased composition (low complexity). STI1 domains lie at 387–434 (NPQL…QEQM) and 438–470 (LPTF…QQGL). The tract at residues 488–520 (LGALGSTGGSSGTNGSNATPSENTSPTAGTTEP) is disordered. Positions 489 to 499 (GALGSTGGSSG) are enriched in gly residues. Polar residues predominate over residues 509-520 (ENTSPTAGTTEP). Residues 546 to 586 (RFQQQLEQPSAMGFLNREANLQALIATGGDINAAIERLLGS) form the UBA domain.

In terms of assembly, monomer and homodimer. Heterodimer with UBQLN2. Binds CD47, NBL1, GABRA1, GABRA2, GABRA3, GABRA6, GABRB1, GABRB2 and GABRB3. Binds UBE3A, BTRC, P4HB and MTOR. Interacts with the proteasome 19S subunit. Interacts (via ubiquitin-like domain) with TREX1; the interaction is direct and may control TREX1 subcellular location. Forms a complex with UBXN4 and VCP. Interacts (via UBA domain) with UBQLN4 (via ubiquitin-like domain). Found in a complex with UBQLN2 and MAP1LC3A/B/C. The monomeric form interacts with PSEN1 and PSEN2. Interacts with ORAI1. Interacts (via UBA domain) with TICAM1. Interacts with EPS15. Interacts (via UBA domain) with UBA52 and (via ubiquitin-like domain) with PSMD3 and PSMD4. Interacts with HERPUD1. Interacts with MAP1LC3A/B/C in the presence of UBQLN4. Interacts (via ubiquitin-like domain) with EPS15 (via UIM domains) and both the ubiquitinated and non-ubiquitinated forms can interact with EPS15. Interacts (via ubiquitin-like domain) with EPS15L1, HGS (via UIM domain) and STAM2 (via UIM domain). Interacts with BCL2L10/BCL-B; in the cytoplasm. Degraded during both macroautophagy and during chaperone-mediated autophagy (CMA). Post-translationally, phosphorylated. In terms of processing, ubiquitinated.

The protein localises to the nucleus. Its subcellular location is the cytoplasm. The protein resides in the endoplasmic reticulum. It is found in the cytoplasmic vesicle. It localises to the autophagosome. The protein localises to the cell membrane. Plays an important role in the regulation of different protein degradation mechanisms and pathways including ubiquitin-proteasome system (UPS), autophagy and endoplasmic reticulum-associated protein degradation (ERAD) pathway. Mediates the proteasomal targeting of misfolded or accumulated proteins for degradation by binding (via UBA domain) to their polyubiquitin chains and by interacting (via ubiquitin-like domain) with the subunits of the proteasome. Plays a role in the ERAD pathway via its interaction with ER-localized proteins UBXN4, VCP and HERPUD1 and may form a link between the polyubiquitinated ERAD substrates and the proteasome. Plays a role in unfolded protein response (UPR) by attenuating the induction of UPR-inducible genes, DDTI3/CHOP, HSPA5 and PDIA2 during ER stress. Involved in the regulation of macroautophagy and autophagosome formation; required for maturation of autophagy-related protein LC3 from the cytosolic form LC3-I to the membrane-bound form LC3-II and may assist in the maturation of autophagosomes to autolysosomes by mediating autophagosome-lysosome fusion. Negatively regulates the TICAM1/TRIF-dependent toll-like receptor signaling pathway by decreasing the abundance of TICAM1 via the autophagic pathway. Promotes the ubiquitination and lysosomal degradation of ORAI1, consequently down-regulating the ORAI1-mediated Ca2+ mobilization. Suppresses the maturation and proteasomal degradation of amyloid beta A4 protein (A4) by stimulating the lysine 63 (K63)-linked polyubiquitination. Delays the maturation of A4 by sequestering it in the Golgi apparatus and preventing its transport to the cell surface for subsequent processing. Ubiquitinates BCL2L10 and thereby stabilizes protein abundance. In Pongo abelii (Sumatran orangutan), this protein is Ubiquilin-1 (UBQLN1).